Here is a 350-residue protein sequence, read N- to C-terminus: Ketol-acid reductoisomerase (NADP(+)) (350 aa).

In terms of domain architecture, KARI N-terminal Rossmann spans 3–183 (AQIWYEDDGD…GALRAGAIKT (181 aa)). NADP(+)-binding positions include 26 to 29 (YGSQ), Arg-49, Ser-52, Ser-54, and 84 to 87 (DQYQ). His-109 is an active-site residue. An NADP(+)-binding site is contributed by Gly-135. A KARI C-terminal knotted domain is found at 184-327 (TFKEETETDL…PKLRAMFSWN (144 aa)). Mg(2+) is bound by residues Asp-192, Glu-196, Glu-228, and Glu-232. Position 253 (Ser-253) interacts with substrate.

Belongs to the ketol-acid reductoisomerase family. Requires Mg(2+) as cofactor.

It catalyses the reaction (2R)-2,3-dihydroxy-3-methylbutanoate + NADP(+) = (2S)-2-acetolactate + NADPH + H(+). The catalysed reaction is (2R,3R)-2,3-dihydroxy-3-methylpentanoate + NADP(+) = (S)-2-ethyl-2-hydroxy-3-oxobutanoate + NADPH + H(+). It functions in the pathway amino-acid biosynthesis; L-isoleucine biosynthesis; L-isoleucine from 2-oxobutanoate: step 2/4. The protein operates within amino-acid biosynthesis; L-valine biosynthesis; L-valine from pyruvate: step 2/4. In terms of biological role, involved in the biosynthesis of branched-chain amino acids (BCAA). Catalyzes an alkyl-migration followed by a ketol-acid reduction of (S)-2-acetolactate (S2AL) to yield (R)-2,3-dihydroxy-isovalerate. In the isomerase reaction, S2AL is rearranged via a Mg-dependent methyl migration to produce 3-hydroxy-3-methyl-2-ketobutyrate (HMKB). In the reductase reaction, this 2-ketoacid undergoes a metal-dependent reduction by NADPH to yield (R)-2,3-dihydroxy-isovalerate. This chain is Ketol-acid reductoisomerase (NADP(+)), found in Bifidobacterium animalis subsp. lactis (strain AD011).